A 79-amino-acid polypeptide reads, in one-letter code: Small ribosomal subunit protein uS17 (79 aa).

The protein belongs to the universal ribosomal protein uS17 family. In terms of assembly, part of the 30S ribosomal subunit.

Its function is as follows. One of the primary rRNA binding proteins, it binds specifically to the 5'-end of 16S ribosomal RNA. This Rhizobium etli (strain ATCC 51251 / DSM 11541 / JCM 21823 / NBRC 15573 / CFN 42) protein is Small ribosomal subunit protein uS17.